A 529-amino-acid chain; its full sequence is MTLSPYLQEVAKRRTFAIISHPDAGKTTITEKVLLFGQAIQTAGTVKGRGSSQHAKSDWMEMEKQRGISITTSVMQFPYHDCLVNLLDTPGHEDFSEDTYRTLTAVDCCLMVIDAAKGVEDRTRKLMEVTRLRDTPILTFMNKLDRDIRDPMELLDEVENELKIGCAPITWPIGCGKLFKGVYHLYKDETYLYQTGKGHTIQEVRIVKGLNNPELDAAVGEDLAQQLRDELELVQGASNEFDKDLFLAGEITPVFFGTALGNFGVDHMLDGLVEWAPAPMPRNTDTREVTATEEKFTGFVFKIQANMDPKHRDRVAFMRVVSGKYEKGMKLRQVRIGKDVVISDALTFMAGDRSHVEEAYPGDIIGLHNHGTIQIGDTFTQGEMMKFTGIPNFAPELFRRIRLKDPLKQKQLLKGLVQLSEEGAVQVFRPIANNDLIVGAVGVLQFDVVVARLKSEYNVEAIYESVNVATARWVESTDVKKFEEFKRKNEVQLALDGGDNLTYIAPTMVNLNLTQERYPDVVFRKTREH.

One can recognise a tr-type G domain in the interval 11–280 (AKRRTFAIIS…GLVEWAPAPM (270 aa)). Residues 20-27 (SHPDAGKT), 88-92 (DTPGH), and 142-145 (NKLD) contribute to the GTP site.

This sequence belongs to the TRAFAC class translation factor GTPase superfamily. Classic translation factor GTPase family. PrfC subfamily.

The protein localises to the cytoplasm. Functionally, increases the formation of ribosomal termination complexes and stimulates activities of RF-1 and RF-2. It binds guanine nucleotides and has strong preference for UGA stop codons. It may interact directly with the ribosome. The stimulation of RF-1 and RF-2 is significantly reduced by GTP and GDP, but not by GMP. This chain is Peptide chain release factor 3, found in Klebsiella pneumoniae (strain 342).